Reading from the N-terminus, the 119-residue chain is Phosphoribosyl-AMP cyclohydrolase (119 aa).

Aspartate 77 lines the Mg(2+) pocket. A Zn(2+)-binding site is contributed by cysteine 78. 2 residues coordinate Mg(2+): aspartate 79 and aspartate 81. Residues cysteine 94 and cysteine 101 each coordinate Zn(2+).

It belongs to the PRA-CH family. Homodimer. The cofactor is Mg(2+). Zn(2+) is required as a cofactor.

The protein localises to the cytoplasm. The catalysed reaction is 1-(5-phospho-beta-D-ribosyl)-5'-AMP + H2O = 1-(5-phospho-beta-D-ribosyl)-5-[(5-phospho-beta-D-ribosylamino)methylideneamino]imidazole-4-carboxamide. It functions in the pathway amino-acid biosynthesis; L-histidine biosynthesis; L-histidine from 5-phospho-alpha-D-ribose 1-diphosphate: step 3/9. In terms of biological role, catalyzes the hydrolysis of the adenine ring of phosphoribosyl-AMP. The protein is Phosphoribosyl-AMP cyclohydrolase of Dinoroseobacter shibae (strain DSM 16493 / NCIMB 14021 / DFL 12).